A 90-amino-acid polypeptide reads, in one-letter code: Small ribosomal subunit protein bS20 (90 aa).

Belongs to the bacterial ribosomal protein bS20 family.

Its function is as follows. Binds directly to 16S ribosomal RNA. This chain is Small ribosomal subunit protein bS20, found in Acidiphilium cryptum (strain JF-5).